The primary structure comprises 260 residues: 5'-nucleotidase SurE (260 aa).

A divalent metal cation contacts are provided by D8, D9, S39, and N96.

This sequence belongs to the SurE nucleotidase family. A divalent metal cation is required as a cofactor.

It is found in the cytoplasm. It carries out the reaction a ribonucleoside 5'-phosphate + H2O = a ribonucleoside + phosphate. Functionally, nucleotidase that shows phosphatase activity on nucleoside 5'-monophosphates. This Moorella thermoacetica (strain ATCC 39073 / JCM 9320) protein is 5'-nucleotidase SurE.